We begin with the raw amino-acid sequence, 540 residues long: MAKEIKFSEEARRAMLRGVDKLADAVKVTLGPKGRNVVLEKKFGSPLITNDGVTIAKEIELEDPFENMGAKLVAEVASKTNDIAGDGTTTATVLAQAMIREGLKNVAAGANPMGIRRGIEKAVAVAVEELKAISKPIKGKESIAQVAAISAADEEVGQLIAEAMERVGNDGVITLEESKGFTTELDVVEGMQFDRGYVSPYMITDTEKMEAVLENPYILITDKKVSNIQELLPVLEQVVQQGRPLLIIAEDVEGEALATLVVNKLRGTFNAVAVKAPGFGDRRKAMLEDIAILTGGEVISEELGRELKSTTVASLGRASKVVVTKETTTIVEGAGDSERIKARINQIRAQLEETTSEFDREKLQERLAKLAGGVAVIKVGAATETELKERKLRIEDALNSTRAAVEEGIVAGGGTALMNVYSKVAAIEAEGDEATGVKIVLRAIEEPVRQIAQNAGLEGSIIVERLKNEKAGIGFNAATGEWVDMIEEGIVDPTKVTRSALQNAASVAAMVLTTEAVVADKPEENKGGANPGMPDMGGMM.

ATP contacts are provided by residues 29-32, 86-90, glycine 413, 476-478, and aspartate 492; these read TLGP, DGTTT, and NAA.

It belongs to the chaperonin (HSP60) family. As to quaternary structure, forms a cylinder of 14 subunits composed of two heptameric rings stacked back-to-back. Interacts with the co-chaperonin GroES.

It localises to the cytoplasm. The catalysed reaction is ATP + H2O + a folded polypeptide = ADP + phosphate + an unfolded polypeptide.. Together with its co-chaperonin GroES, plays an essential role in assisting protein folding. The GroEL-GroES system forms a nano-cage that allows encapsulation of the non-native substrate proteins and provides a physical environment optimized to promote and accelerate protein folding. The sequence is that of Chaperonin GroEL from Geobacillus thermodenitrificans (strain NG80-2).